We begin with the raw amino-acid sequence, 215 residues long: Adenylate kinase (215 aa).

An ATP-binding site is contributed by 10-15 (GAGKGT). An NMP region spans residues 30–59 (STGDMLRAAVKAETELGLKAKSVMDSGGLV). AMP-binding positions include Thr-31, Arg-36, 57-59 (GLV), 85-88 (GFPR), and Gln-92. Positions 122 to 159 (GRRVHEGSGRIYHTIFNPPKVEGIDDVTGEPLLQRKDD) are LID. Residues Arg-123 and 132–133 (IY) contribute to the ATP site. AMP is bound by residues Arg-156 and Arg-167. Gly-201 lines the ATP pocket.

Belongs to the adenylate kinase family. Monomer.

Its subcellular location is the cytoplasm. The catalysed reaction is AMP + ATP = 2 ADP. Its pathway is purine metabolism; AMP biosynthesis via salvage pathway; AMP from ADP: step 1/1. Functionally, catalyzes the reversible transfer of the terminal phosphate group between ATP and AMP. Plays an important role in cellular energy homeostasis and in adenine nucleotide metabolism. The sequence is that of Adenylate kinase from Pseudomonas syringae pv. syringae (strain B728a).